The sequence spans 422 residues: Validoxylamine A glucosyltransferase (422 aa).

Belongs to the glycosyltransferase 2 family. It depends on Mn(2+) as a cofactor.

The enzyme catalyses validoxylamine A + UDP-alpha-D-glucose = validamycin A + UDP + H(+). Involved in the biosynthesis of the antifungal agent validamycin A. Catalyzes the final attachment of glucose from UDP-alpha-D-glucose to validoxylamine A to yield validamycin A. UDP-glucose is the most efficient glycosyl donor, whereas GDP-glucose and ADP-glucose are much less efficient. ValG also utilizes UDP-galactose as substrate to produce the new validamycin analog, 4''-epi-validamycin A. This is Validoxylamine A glucosyltransferase from Streptomyces hygroscopicus subsp. jinggangensis (strain 5008).